Consider the following 461-residue polypeptide: Epidermin leader peptide-processing serine protease EpiP (461 aa).

A signal peptide spans M1–A23. The 339-residue stretch at Q121 to L459 folds into the Peptidase S8 domain. Catalysis depends on charge relay system residues D149, H194, and S402.

Belongs to the peptidase S8 family.

Its pathway is antibiotic biosynthesis; epidermin biosynthesis. Protease which cleaves the matured lantibiotic from the modified prepeptide. This chain is Epidermin leader peptide-processing serine protease EpiP (epiP), found in Staphylococcus epidermidis.